A 364-amino-acid polypeptide reads, in one-letter code: Aminomethyltransferase (364 aa).

This sequence belongs to the GcvT family. As to quaternary structure, the glycine cleavage system is composed of four proteins: P, T, L and H.

The catalysed reaction is N(6)-[(R)-S(8)-aminomethyldihydrolipoyl]-L-lysyl-[protein] + (6S)-5,6,7,8-tetrahydrofolate = N(6)-[(R)-dihydrolipoyl]-L-lysyl-[protein] + (6R)-5,10-methylene-5,6,7,8-tetrahydrofolate + NH4(+). Functionally, the glycine cleavage system catalyzes the degradation of glycine. The polypeptide is Aminomethyltransferase (Shewanella sediminis (strain HAW-EB3)).